The following is a 534-amino-acid chain: Glutamyl-tRNA(Gln) amidotransferase subunit B, mitochondrial (534 aa).

Residues 1-28 constitute a mitochondrion transit peptide; that stretch reads MTVLCRLRHCHLSTPTLCRRFHDARVYK.

The protein belongs to the GatB/GatE family. GatB subfamily. Subunit of the heterotrimeric GatCAB amidotransferase (AdT) complex, composed of A, B and C subunits.

The protein localises to the mitochondrion. It carries out the reaction L-glutamyl-tRNA(Gln) + L-glutamine + ATP + H2O = L-glutaminyl-tRNA(Gln) + L-glutamate + ADP + phosphate + H(+). Its function is as follows. Allows the formation of correctly charged Gln-tRNA(Gln) through the transamidation of misacylated Glu-tRNA(Gln) in the mitochondria. The reaction takes place in the presence of glutamine and ATP through an activated gamma-phospho-Glu-tRNA(Gln). The chain is Glutamyl-tRNA(Gln) amidotransferase subunit B, mitochondrial from Laccaria bicolor (strain S238N-H82 / ATCC MYA-4686) (Bicoloured deceiver).